We begin with the raw amino-acid sequence, 91 residues long: Large ribosomal subunit protein eL43 (91 aa).

Residues 39–60 form a C4-type zinc finger; it reads CSFCGKDAVRRSSVGIWKCNGC.

It belongs to the eukaryotic ribosomal protein eL43 family.

This Dictyostelium discoideum (Social amoeba) protein is Large ribosomal subunit protein eL43 (rpl37A).